The chain runs to 250 residues: 5'-nucleotidase SurE (250 aa).

Residues Asp8, Asp9, Ser39, and Asn95 each coordinate a divalent metal cation.

This sequence belongs to the SurE nucleotidase family. It depends on a divalent metal cation as a cofactor.

It is found in the cytoplasm. It carries out the reaction a ribonucleoside 5'-phosphate + H2O = a ribonucleoside + phosphate. Nucleotidase that shows phosphatase activity on nucleoside 5'-monophosphates. This is 5'-nucleotidase SurE from Cupriavidus taiwanensis (strain DSM 17343 / BCRC 17206 / CCUG 44338 / CIP 107171 / LMG 19424 / R1) (Ralstonia taiwanensis (strain LMG 19424)).